The following is an 86-amino-acid chain: MLSQKPKKKHNFLNHGLSLNLVIKPYLALEGSVAFPAENGVQDTESTQEKRETGDEENSAKFPVGRRDFDTLSCMLGRVYQSCWQV.

The interval 31-49 is NGE-like; that stretch reads GSVAFPAENGVQDTESTQE. The tract at residues 38 to 62 is disordered; it reads ENGVQDTESTQEKRETGDEENSAKF. Residues 52-64 form an NEI-like region; sequence ETGDEENSAKFPV. The interval 68–86 is melanin-concentrating hormone-like; it reads DFDTLSCMLGRVYQSCWQV.

It belongs to the melanin-concentrating hormone family. In terms of tissue distribution, expressed in testis and brain.

The polypeptide is Putative pro-MCH-like protein 1 (PMCHL1) (Homo sapiens (Human)).